Consider the following 463-residue polypeptide: Argininosuccinate lyase (463 aa).

This sequence belongs to the lyase 1 family. Argininosuccinate lyase subfamily.

The protein resides in the cytoplasm. It carries out the reaction 2-(N(omega)-L-arginino)succinate = fumarate + L-arginine. The protein operates within amino-acid biosynthesis; L-arginine biosynthesis; L-arginine from L-ornithine and carbamoyl phosphate: step 3/3. The polypeptide is Argininosuccinate lyase (Bradyrhizobium sp. (strain BTAi1 / ATCC BAA-1182)).